The following is a 1187-amino-acid chain: Disease resistance protein TAO1 (1187 aa).

Positions 38-202 constitute a TIR domain; sequence WLHPVFLSFR…KISKDVSDVL (165 aa). Glu-113 is an active-site residue. Positions 217–478 constitute an NB-ARC domain; that stretch reads EAHTTEITSL…FFRRERIETL (262 aa). LRR repeat units lie at residues 498-522, 611-633, 635-658, 660-679, 680-703, 704-727, 728-750, 752-775, 799-823, 824-849, 870-894, 895-918, 920-942, and 953-974; these read DKSL…GLDI, SRKL…KFNP, FLVK…PIRN, KWMD…FSTA, TNLQ…IGNA, TNLL…IGNL, TNLK…SFGN, TSLK…IGNI, NTNL…MLNL, TRLE…VINL, ATNL…IWNI, TNLQ…VENA, NLQS…IWRI, and CSSL…LILD.

It carries out the reaction NAD(+) + H2O = ADP-D-ribose + nicotinamide + H(+). In terms of biological role, TIR-NB-LRR receptor-like protein that contributes to disease resistance induced by the Pseudomonas syringae type III effector AvrB. Acts additively with RPM1 to generate a full disease resistance response to P.syringae expressing this type III effector. This Arabidopsis thaliana (Mouse-ear cress) protein is Disease resistance protein TAO1.